The chain runs to 271 residues: uncharacterized protein (271 aa).

Belongs to the HAD-like hydrolase superfamily.

This is an uncharacterized protein from Staphylococcus aureus (strain NCTC 8325 / PS 47).